The primary structure comprises 428 residues: Adenylosuccinate synthetase (428 aa).

Residues 12–18 (GDEGKGK) and 40–42 (GHT) contribute to the GTP site. Aspartate 13 acts as the Proton acceptor in catalysis. The Mg(2+) site is built by aspartate 13 and glycine 40. Residues 13 to 16 (DEGK), 38 to 41 (NAGH), threonine 128, arginine 142, glutamine 223, threonine 238, and arginine 302 each bind IMP. Histidine 41 serves as the catalytic Proton donor. 298–304 (VTTKRPR) contacts substrate. Residues arginine 304, 330 to 332 (KLD), and 412 to 414 (GVG) each bind GTP.

The protein belongs to the adenylosuccinate synthetase family. As to quaternary structure, homodimer. Requires Mg(2+) as cofactor.

It is found in the cytoplasm. The catalysed reaction is IMP + L-aspartate + GTP = N(6)-(1,2-dicarboxyethyl)-AMP + GDP + phosphate + 2 H(+). Its pathway is purine metabolism; AMP biosynthesis via de novo pathway; AMP from IMP: step 1/2. Plays an important role in the de novo pathway of purine nucleotide biosynthesis. Catalyzes the first committed step in the biosynthesis of AMP from IMP. In Cutibacterium acnes (strain DSM 16379 / KPA171202) (Propionibacterium acnes), this protein is Adenylosuccinate synthetase.